Here is a 471-residue protein sequence, read N- to C-terminus: Variant surface glycoprotein ILTAT 1.21 (471 aa).

An N-terminal signal peptide occupies residues 1-21; it reads MLRALLPSTTLALILAGGGHA. Asn-64 and Asn-405 each carry an N-linked (GlcNAc...) asparagine glycan. The tract at residues 406–449 is disordered; the sequence is ATADECPETRCEYDSEKNECRPKKGTETTATGPGERTTPADGKA. Positions 412–431 are enriched in basic and acidic residues; the sequence is PETRCEYDSEKNECRPKKGT. Asn-450 carries N-linked (GlcNAc...) asparagine glycosylation. Residue Ser-454 is the site of GPI-anchor amidated serine attachment. The propeptide at 455–471 is removed in mature form; sequence DSLLIKTSPLWLAFLLF.

The protein localises to the cell membrane. In terms of biological role, VSG forms a coat on the surface of the parasite. The trypanosome evades the immune response of the host by expressing a series of antigenically distinct VSGs from an estimated 1000 VSG genes. This chain is Variant surface glycoprotein ILTAT 1.21, found in Trypanosoma brucei brucei.